Reading from the N-terminus, the 223-residue chain is Probable transaldolase (223 aa).

Lysine 83 functions as the Schiff-base intermediate with substrate in the catalytic mechanism.

Belongs to the transaldolase family. Type 3B subfamily.

It is found in the cytoplasm. It carries out the reaction D-sedoheptulose 7-phosphate + D-glyceraldehyde 3-phosphate = D-erythrose 4-phosphate + beta-D-fructose 6-phosphate. Its pathway is carbohydrate degradation; pentose phosphate pathway; D-glyceraldehyde 3-phosphate and beta-D-fructose 6-phosphate from D-ribose 5-phosphate and D-xylulose 5-phosphate (non-oxidative stage): step 2/3. Functionally, transaldolase is important for the balance of metabolites in the pentose-phosphate pathway. The protein is Probable transaldolase of Myxococcus xanthus (strain DK1622).